A 188-amino-acid polypeptide reads, in one-letter code: Putative manganese efflux pump MntP (188 aa).

A run of 6 helical transmembrane segments spans residues 3 to 23, 35 to 55, 70 to 90, 104 to 126, 140 to 160, and 167 to 187; these read LYALLLIALGMSMDAFAVALA, IAATALVFGTVEALTPLAGWV, WAAFVLLGGLGLKMMHEGLSG, WLTVLTAFGTSIDSMIVGVGLAF, MATTVLVAVGLTVGRALGVLF, and AGGLVLIAIGTWTLLSHLGLI.

Belongs to the MntP (TC 9.B.29) family.

The protein localises to the cell inner membrane. In terms of biological role, probably functions as a manganese efflux pump. This Neisseria meningitidis serogroup C / serotype 2a (strain ATCC 700532 / DSM 15464 / FAM18) protein is Putative manganese efflux pump MntP.